The sequence spans 401 residues: Glyceraldehyde-3-phosphate dehydrogenase A, chloroplastic (401 aa).

Residues 1 to 65 (MASNMLSIAN…RSSQNGVVEA (65 aa)) constitute a chloroplast transit peptide. NADP(+) contacts are provided by residues 76–77 (RI), Asp-100, and Arg-145. D-glyceraldehyde 3-phosphate is bound by residues 217–219 (SCT), Thr-248, Arg-263, 276–277 (TG), and Arg-299. Cys-218 acts as the Nucleophile in catalysis. An NADP(+)-binding site is contributed by Asn-381.

It belongs to the glyceraldehyde-3-phosphate dehydrogenase family. Tetramer of either four A chains (GAPDH 2) or two A and two B chains (GAPDH 1).

The protein resides in the plastid. It is found in the chloroplast. The catalysed reaction is D-glyceraldehyde 3-phosphate + phosphate + NADP(+) = (2R)-3-phospho-glyceroyl phosphate + NADPH + H(+). It functions in the pathway carbohydrate biosynthesis; Calvin cycle. In Spinacia oleracea (Spinach), this protein is Glyceraldehyde-3-phosphate dehydrogenase A, chloroplastic (GAPA).